The following is a 955-amino-acid chain: Thrombospondin-4 (955 aa).

A signal peptide spans 1 to 24 (MPRRKGLCLFLQMLLLHLYGVCQA). A Laminin G-like domain is found at 25 to 192 (QPNYQVFDLL…MDELKLVMGG (168 aa)). An EGF-like 1 domain is found at 281-320 (PKPRCDATSCFRGVRCIDTEGGFQCGPCPEGYTGNGVICT). 21 disulfide bridges follow: cysteine 285–cysteine 296, cysteine 290–cysteine 305, cysteine 308–cysteine 319, cysteine 325–cysteine 336, cysteine 330–cysteine 345, cysteine 348–cysteine 372, cysteine 378–cysteine 392, cysteine 386–cysteine 401, cysteine 404–cysteine 416, cysteine 422–cysteine 435, cysteine 429–cysteine 445, cysteine 447–cysteine 458, cysteine 474–cysteine 479, cysteine 484–cysteine 504, cysteine 520–cysteine 540, cysteine 543–cysteine 563, cysteine 579–cysteine 599, cysteine 602–cysteine 622, cysteine 640–cysteine 660, cysteine 680–cysteine 700, and cysteine 716–cysteine 937. Positions 321-358 (DVDECRLNPCFLGVRCINTSPGFKCESCPPGYTGSTIQ) constitute an EGF-like 2; calcium-binding domain. One can recognise an EGF-like 3; calcium-binding domain in the interval 374 to 415 (DTNECENGRNGGCTSNSLCINTMGSFRCGGCKPGYVGDQIKG). The EGF-like 4 domain occupies 418-459 (PEKSCRHGQNPCHASAQCSEEKDGDVTCTCSVGWAGNGYLCG). TSP type-3 repeat units follow at residues 460–492 (KDTD…NSGQ), 493–528 (EDTD…NIDQ), 529–551 (KNSD…NNDQ), 552–587 (RDTD…NVDQ), 588–610 (KDKD…NPNQ), 611–648 (SDID…NSNQ), 649–688 (LDTD…NPGQ), and 689–724 (EDDN…EITL). A glycan (N-linked (GlcNAc...) asparagine) is linked at asparagine 609. The interval 610–678 (QSDIDNDLVG…IPDTVPPGPD (69 aa)) is disordered. Residues 637–649 (TDNCPTVINSNQL) show a composition bias toward polar residues. Acidic residues predominate over residues 657-668 (GDECDDDDDNDG). Positions 728–942 (RAYQTVVLDP…LKYRCNDTIP (215 aa)) constitute a TSP C-terminal domain. An N-linked (GlcNAc...) asparagine glycan is attached at asparagine 938.

This sequence belongs to the thrombospondin family. In terms of assembly, homotrimer; disulfide-linked.

It is found in the endoplasmic reticulum. It localises to the sarcoplasmic reticulum. The protein resides in the secreted. The protein localises to the extracellular space. Its subcellular location is the extracellular matrix. In terms of biological role, adhesive glycoprotein that mediates cell-to-cell and cell-to-matrix interactions and may be involved in various processes including cellular proliferation, migration, adhesion and attachment. May play a role in ER stress response. May participate in the genesis and function of cardiac and skeletal muscle. This is Thrombospondin-4 (thbs4) from Xenopus laevis (African clawed frog).